A 234-amino-acid polypeptide reads, in one-letter code: Inner membrane protein YbhL (234 aa).

Residues 1 to 23 (MDRFPRSDSIVQPRAGLQTYMAQ) lie on the Periplasmic side of the membrane. The chain crosses the membrane as a helical span at residues 24–44 (VYGWMTVGLLLTAFVAWYAAN). The Cytoplasmic segment spans residues 45-56 (SAAVMELLFTNR). Residues 57–77 (VFLIGLIIAQLALVIVLSAMI) traverse the membrane as a helical segment. Topologically, residues 78–79 (QK) are periplasmic. A helical transmembrane segment spans residues 80 to 100 (LSAGVTTMLFMLYSALTGLTL). Residues 101–102 (SS) are Cytoplasmic-facing. Residues 103–123 (IFIVYTAASIASTFVVTAGMF) traverse the membrane as a helical segment. Residues 124–136 (GAMSLYGYTTKRD) are Periplasmic-facing. The chain crosses the membrane as a helical span at residues 137 to 157 (LSGFGNMLFMALIGIVLASLV). The Cytoplasmic segment spans residues 158 to 163 (NFWLKS). Residues 164–184 (EALMWAVTYIGVIVFVGLTAY) form a helical membrane-spanning segment. Over 185–206 (DTQKLKNMGEQIDTRDTSNLRK) the chain is Periplasmic. The chain crosses the membrane as a helical span at residues 207–227 (YSILGALTLYLDFINLFLMLL). Residues 228 to 234 (RIFGNRR) are Cytoplasmic-facing.

The protein belongs to the BI1 family.

It is found in the cell inner membrane. The chain is Inner membrane protein YbhL (ybhL) from Escherichia coli (strain K12).